The following is a 550-amino-acid chain: Sterol O-acyltransferase 1 (550 aa).

Residue Met1 is modified to N-acetylmethionine. Residues 1–36 (MVGEEKMSLRNRLSKSRENPEEDEDQRKPAKESLEA) are disordered. The Cytoplasmic portion of the chain corresponds to 1 to 138 (MVGEEKMSLR…LDELLEVDHI (138 aa)). The residue at position 8 (Ser8) is a Phosphoserine. Residues 15 to 34 (KSRENPEEDEDQRKPAKESL) are compositionally biased toward basic and acidic residues. His137 serves as a coordination point for cholesterol. The chain crosses the membrane as a helical span at residues 139–160 (RTIYHMFIALLILFILSTLVVD). Topologically, residues 161 to 180 (YIDEGRLVLEFSLLSYAFGK) are lumenal. Residues 181–206 (FPTVVWTWWIMFLSTFSVPYFLFQRW) traverse the membrane as a helical segment. Residues 207-218 (ATGYSKSSHPLI) lie on the Cytoplasmic side of the membrane. Residues 219–244 (NSLFHGFLFMVFQIGILGFGPTYVVL) form a helical membrane-spanning segment. Topologically, residues 245-252 (AYTLPPAS) are lumenal. Residues 253 to 276 (RFIIIFEQIRFVMKAHSFVRENVP) traverse the membrane as a helical segment. Topologically, residues 277 to 319 (RVLNSAKEKSSTVPIPTVNQYLYFLFAPTLIYRDSYPRNPTVR) are cytoplasmic. The helical transmembrane segment at 320-352 (WGYVAMQFAQVFGCFFYVYYIFERLCAPLFRNI) threads the bilayer. Residues 353 to 369 (KQEPFSARVLVLCVFNS) are Lumenal-facing. A helical membrane pass occupies residues 370–395 (ILPGVLILFLTFFAFLHCWLNAFAEM). Residues 396–443 (LRFGDRMFYKDWWNSTSYSNYYRTWNVVVHDWLYYYAYKDFLWFFSKR) lie on the Cytoplasmic side of the membrane. The FYXDWWN motif signature appears at 403-409 (FYKDWWN). Positions 415, 418, 421, 425, 433, 445, and 456 each coordinate an acyl-CoA. A helical transmembrane segment spans residues 444-468 (FKSAAMLAAFAVSAVVHEYALAVCL). Residue His460 is part of the active site. The Lumenal segment spans residues 469–474 (SFFYPV). The chain crosses the membrane as a helical span at residues 475 to 490 (LFVLFMFFGMAFNFIV). The Cytoplasmic portion of the chain corresponds to 491–496 (NDSRKK). A helical membrane pass occupies residues 497–528 (PIWNVMMWTSLFLGNGVLLCFYSQEWYARQHC). Residues Cys528 and Cys546 are joined by a disulfide bond. The Lumenal segment spans residues 529-550 (PLKNPTFLDYVRPRSWTCRYVF).

This sequence belongs to the membrane-bound acyltransferase family. Sterol o-acyltransferase subfamily. In terms of assembly, may form homo- or heterodimers. Interacts with UBIAD1. As to expression, expressed in most tissues, but most strongly in the adrenal gland. Expressed more strongly in liver Kupffer cells than in hepatocytes.

Its subcellular location is the endoplasmic reticulum membrane. The enzyme catalyses a sterol + a long-chain fatty acyl-CoA = a long-chain 3-hydroxysterol ester + CoA. It catalyses the reaction cholesterol + an acyl-CoA = a cholesterol ester + CoA. The catalysed reaction is cholesterol + (9Z)-octadecenoyl-CoA = cholesteryl (9Z-octadecenoate) + CoA. It carries out the reaction cholesterol + hexadecanoyl-CoA = cholesteryl hexadecanoate + CoA. The enzyme catalyses octadecanoyl-CoA + cholesterol = cholesteryl octadecanoate + CoA. It catalyses the reaction (9Z,12Z)-octadecadienoyl-CoA + cholesterol = cholesteryl (9Z,12Z)-octadecadienoate + CoA. The catalysed reaction is (5Z,8Z,11Z,14Z)-eicosatetraenoyl-CoA + cholesterol = cholesteryl (5Z,8Z,11Z,14Z)-eicosatetraenoate + CoA. It carries out the reaction (9Z)-hexadecenoyl-CoA + cholesterol = cholesteryl (9Z)-hexadecenoate + CoA. The enzyme catalyses (11Z)-octadecenoyl-CoA + cholesterol = cholesteryl (11Z)-octadecenoate + CoA. It catalyses the reaction (7Z)-octadecenoyl-CoA + cholesterol = cholesteryl (7Z)-octadecenoate + CoA. Functionally, catalyzes the formation of fatty acid-cholesterol esters, which are less soluble in membranes than cholesterol. Plays a role in lipoprotein assembly and dietary cholesterol absorption. Preferentially utilizes oleoyl-CoA ((9Z)-octadecenoyl-CoA) as a substrate: shows a higher activity towards an acyl-CoA substrate with a double bond at the delta-9 position (9Z) than towards saturated acyl-CoA or an unsaturated acyl-CoA with a double bond at the delta-7 (7Z) or delta-11 (11Z) positions. The chain is Sterol O-acyltransferase 1 (SOAT1) from Macaca fascicularis (Crab-eating macaque).